We begin with the raw amino-acid sequence, 270 residues long: Myeloid leukemia factor 1 (270 aa).

Residues Ser6, Ser8, Ser32, and Ser34 each carry the phosphoserine modification. Residues 50–125 are interaction with COPS3; sequence RARNRMGHED…VGDEPPKVFQ (76 aa). Disordered stretches follow at residues 127 to 148 and 221 to 247; these read STQT…RDSD and RSVA…AIEH. Residues 138–148 are compositionally biased toward basic and acidic residues; the sequence is KETRKALRDSD.

Belongs to the MLF family. In terms of assembly, interacts with CENPU. Also interacts with NRBP1/MADM, YWHAZ/14-3-3-zeta and HNRPUL2/MANP. NRBP1 recruits a serine kinase which phosphorylates both itself and MLF1. Phosphorylated MLF1 then binds to YWHAZ and is retained in the cytoplasm. Retained in the nucleus by binding to HNRPUL2. Binds to COPS3/CSN3 which is required for suppression of COP1 and activation of p53. Post-translationally, phosphorylation is required for binding to YWHAZ.

Its subcellular location is the cytoplasm. It is found in the nucleus. The protein resides in the cell projection. It localises to the cilium. The protein localises to the cytoskeleton. Its subcellular location is the cilium basal body. In terms of biological role, involved in lineage commitment of primary hemopoietic progenitors by restricting erythroid formation and enhancing myeloid formation. Interferes with erythropoietin-induced erythroid terminal differentiation by preventing cells from exiting the cell cycle through suppression of CDKN1B/p27Kip1 levels. Suppresses COP1 activity via CSN3 which activates p53 and induces cell cycle arrest. Binds DNA and affects the expression of a number of genes so may function as a transcription factor in the nucleus. The protein is Myeloid leukemia factor 1 (MLF1) of Bos taurus (Bovine).